The primary structure comprises 300 residues: Protoheme IX farnesyltransferase (300 aa).

The next 9 membrane-spanning stretches (helical) occupy residues 24–44 (VTQLAVFCAVIGMFLATPGMV), 46–66 (WHVLIGGTVGIWLLAGAAFAI), 94–114 (PQILIFSAVLGSVGAWTLYTF), 118–138 (LTMWLTIATFVGYAVIYTLLL), 146–166 (IVIGGASGAMPPALGWAAVTG), 172–192 (AWILVLIIFVWTPPHFWVLAL), 217–237 (LHILLYTVILFAVTLMPFISG), 239–259 (SGAVYLTSAVLLGAVFLAYAW), and 278–298 (IVYLSLLFAALLVDHYARPLL).

This sequence belongs to the UbiA prenyltransferase family. Protoheme IX farnesyltransferase subfamily.

Its subcellular location is the cell inner membrane. The catalysed reaction is heme b + (2E,6E)-farnesyl diphosphate + H2O = Fe(II)-heme o + diphosphate. It functions in the pathway porphyrin-containing compound metabolism; heme O biosynthesis; heme O from protoheme: step 1/1. Its function is as follows. Converts heme B (protoheme IX) to heme O by substitution of the vinyl group on carbon 2 of heme B porphyrin ring with a hydroxyethyl farnesyl side group. The polypeptide is Protoheme IX farnesyltransferase (Burkholderia lata (strain ATCC 17760 / DSM 23089 / LMG 22485 / NCIMB 9086 / R18194 / 383)).